We begin with the raw amino-acid sequence, 181 residues long: MQAATLSFQPSAPPLQTSAFHFSSKQPNQLKYSLFSYTCPILKRSLLSTQTLSRKSICKPPDVATGKYVREDYLVKKVSAKDIQELIKGERNVPLIIDFYATWCGPCILMAQELEMLAVEYESNALIVKVDTDDEYEFARDMQVRGLPTLYFISPDPNKDAIRTEGLIPIQMMRDIINNDL.

A chloroplast-targeting transit peptide spans 1 to 70; it reads MQAATLSFQP…PDVATGKYVR (70 aa). The Thioredoxin domain occupies 72–181; that stretch reads DYLVKKVSAK…MMRDIINNDL (110 aa). Residues Cys-104 and Cys-107 each act as nucleophile in the active site. Cysteines 104 and 107 form a disulfide.

It belongs to the thioredoxin family. Plant CITRX-type subfamily.

The protein localises to the plastid. It localises to the chloroplast. Probable thiol-disulfide oxidoreductase that may play a role in proper chloroplast development. The sequence is that of Thioredoxin-like protein CITRX2, chloroplastic from Nicotiana benthamiana.